The following is a 687-amino-acid chain: CWF19-like protein 2 homolog (687 aa).

The stretch at 6-51 (FESGREKDKARQELREAREAMLQQAKERAELRGQRERQKELRGEAD) forms a coiled coil. Positions 24-50 (EAMLQQAKERAELRGQRERQKELRGEA) are enriched in basic and acidic residues. The interval 24–281 (EAMLQQAKER…PKSRPSCLTD (258 aa)) is disordered. Residues 66–92 (KKSKKNVSKHKSRSKSKSSKKSRKHRN) show a composition bias toward basic residues. Residues 93–107 (SSSSSESSTSSSSSF) show a composition bias toward low complexity. A coiled-coil region spans residues 108–131 (SEDEKERKRRKKKSKRSRKESASE). A compositionally biased stretch (basic residues) spans 114–125 (RKRRKKKSKRSR). Residues S128 and S130 each carry the phosphoserine modification. Composition is skewed to basic and acidic residues over residues 146-157 (VTKKEPPQRDDW) and 168-180 (FSRE…KPNE). Positions 290–325 (KAIKAELKGKKELAAELNQQLEAARKERAEFIASGE) form a coiled coil. A disordered region spans residues 355–383 (VRPLVQSGDPNESYGGRMGPKRGSKKVDT). A coiled-coil region spans residues 444–475 (KQISASDAEKREMQSAIREHEKLVATLDNCER).

The protein belongs to the CWF19 family.

The polypeptide is CWF19-like protein 2 homolog (Drosophila melanogaster (Fruit fly)).